A 516-amino-acid polypeptide reads, in one-letter code: MREIITLQLGQRSNYLATHFWNVQESYFTYSENEASPVDHDISFRPGIGADGSETFTPRTIIYDLKGGFGSLRQYNALYEVEENVGMPKGLWDGNEVIQRQPNIPQSEYQKALELGLPLPRLTPETVRYWSDFNRLFYHPKSIVQLNEYEMNSQLMPFEDWTVGEAFFNSLDREHDLLDRDFRPFAEECDQLRGIQLFTGTDDAWGGFAARYIDRLRDEFGKKIIWTFALESGLKTEREKQFLRAKNSAKSISEISRQSTAYVPISMPPSKLPHYVNLNIASEWYISALTSVAVESVTLPGRLRWYEGIEPWFLDNAGPQRIFALRATIRSENSELPFASHLRPNDSTQMDTDEVDHDEIEQSEQRFDLGFSPIGSATRTNNTHIFSQVQVVRDSKCNSERPERAEVGQGLTSHRLSLMTGYVPSTLSNFRSTLEFPILDSFPSDLIHEQGPAGSTLRVDAALSATSGIGRDLKNLQQTIGRRIALEEREDLINGLHELSHAYQAGWENDSDSGDD.

This sequence belongs to the misato family.

The protein resides in the mitochondrion. Its function is as follows. Involved in the partitioning of the mitochondrial organelle and mitochondrial DNA (mtDNA) inheritance. The sequence is that of Protein DML1 (DML1) from Coccidioides immitis (strain RS) (Valley fever fungus).